A 152-amino-acid chain; its full sequence is Large ribosomal subunit protein eL29 (152 aa).

Residues 1–26 (MAKSKNHTTHNQSRKWHRNGIKKPRS) show a composition bias toward basic residues. The interval 1–32 (MAKSKNHTTHNQSRKWHRNGIKKPRSQRYESL) is disordered. K5 bears the N6-methyllysine mark. Phosphoserine is present on S31. At K33 the chain carries N6-acetyllysine. Positions 119–152 (CRPKSQAKASTKAKPPAAAAPAAKGAQAPTKAPE) are disordered. The span at 121 to 152 (PKSQAKASTKAKPPAAAAPAAKGAQAPTKAPE) shows a compositional bias: low complexity.

The protein belongs to the eukaryotic ribosomal protein eL29 family. Component of the large ribosomal subunit.

It localises to the cytoplasm. In terms of biological role, component of the large ribosomal subunit. The ribosome is a large ribonucleoprotein complex responsible for the synthesis of proteins in the cell. This chain is Large ribosomal subunit protein eL29 (RPL29), found in Bos taurus (Bovine).